The primary structure comprises 105 residues: UPF0235 protein RPR_04990 (105 aa).

This sequence belongs to the UPF0235 family.

This chain is UPF0235 protein RPR_04990, found in Rickettsia peacockii (strain Rustic).